Here is a 204-residue protein sequence, read N- to C-terminus: MRVLRVDASARVDDSVTRRLADLMLEILGERVPDLSVVRREAAGMPFVDDAWVGANSTDPEARDSAQRWALAKSDELVSEVMAADVLVIATPIYNFGVPASLKAWVDQVARARLTFRDTEYGPEGLLTGKKAYVLVASGGTEVGSDIDFATPWLEFVLGFLGITDVEVIAADRGMLRGDSARQNAAEHVADVLERDWPALAEAS.

Ser9 is an FMN binding site.

This sequence belongs to the azoreductase type 1 family. As to quaternary structure, homodimer. Requires FMN as cofactor.

The catalysed reaction is 2 a quinone + NADH + H(+) = 2 a 1,4-benzosemiquinone + NAD(+). The enzyme catalyses N,N-dimethyl-1,4-phenylenediamine + anthranilate + 2 NAD(+) = 2-(4-dimethylaminophenyl)diazenylbenzoate + 2 NADH + 2 H(+). Quinone reductase that provides resistance to thiol-specific stress caused by electrophilic quinones. In terms of biological role, also exhibits azoreductase activity. Catalyzes the reductive cleavage of the azo bond in aromatic azo compounds to the corresponding amines. This is FMN-dependent NADH:quinone oxidoreductase from Thiobacillus denitrificans (strain ATCC 25259 / T1).